A 380-amino-acid chain; its full sequence is MAPNIRKSHPLLKMINNSLIDLPAPSNISAWWNFGSLLAVCLATQILTGLLLAMHYTADTSLAFWSVAHTCRNVQYGWLIRNLHANGASFFFICIFLHIGRGLYYGSYLYKETWNTGVILLLTLMATAFVGYVLPWGQMSFWGATVITNLFSAIPYIGQTLVEWAWGGFSVDNPTLTRFFALHFLLPFVIAGITIIHLTFLHESGSNNPLGISSNSDKIPFHPYYSLKDILGLALMFIPFLALALFSPNFLGDPENFTPANPLVTPPHIKPEWYFLFAYAILRSIPNKLGGVLALAASVLILLLIPFLHKSKQRTMTFRPLSQILFWLLVANLLVLTWIGSQPVEHPFIIIGQVASFSYFNILLILFPMAGALENKMLNY.

The next 4 membrane-spanning stretches (helical) occupy residues 34–54, 78–99, 114–134, and 179–199; these read FGSL…LLAM, WLIR…FLHI, WNTG…GYVL, and FFAL…IHLT. Heme b contacts are provided by His-84 and His-98. Heme b contacts are provided by His-183 and His-197. A ubiquinone is bound at residue His-202. 4 consecutive transmembrane segments (helical) span residues 227 to 247, 289 to 309, 321 to 341, and 348 to 368; these read LKDI…ALFS, LGGV…PFLH, LSQI…WIGS, and FIII…ILFP.

Belongs to the cytochrome b family. The cytochrome bc1 complex contains 11 subunits: 3 respiratory subunits (MT-CYB, CYC1 and UQCRFS1), 2 core proteins (UQCRC1 and UQCRC2) and 6 low-molecular weight proteins (UQCRH/QCR6, UQCRB/QCR7, UQCRQ/QCR8, UQCR10/QCR9, UQCR11/QCR10 and a cleavage product of UQCRFS1). This cytochrome bc1 complex then forms a dimer. It depends on heme b as a cofactor.

The protein resides in the mitochondrion inner membrane. Its function is as follows. Component of the ubiquinol-cytochrome c reductase complex (complex III or cytochrome b-c1 complex) that is part of the mitochondrial respiratory chain. The b-c1 complex mediates electron transfer from ubiquinol to cytochrome c. Contributes to the generation of a proton gradient across the mitochondrial membrane that is then used for ATP synthesis. The chain is Cytochrome b (MT-CYB) from Polyplectron bicalcaratum (Grey peacock-pheasant).